The primary structure comprises 326 residues: DNA-directed RNA polymerase subunit alpha (326 aa).

The alpha N-terminal domain (alpha-NTD) stretch occupies residues 1 to 231; it reads MQSNSLLKPR…DQLSVFADLE (231 aa). Positions 245–326 are alpha C-terminal domain (alpha-CTD); the sequence is IDPVLLRPVD…WPPAGLEKLG (82 aa).

The protein belongs to the RNA polymerase alpha chain family. As to quaternary structure, homodimer. The RNAP catalytic core consists of 2 alpha, 1 beta, 1 beta' and 1 omega subunit. When a sigma factor is associated with the core the holoenzyme is formed, which can initiate transcription.

It carries out the reaction RNA(n) + a ribonucleoside 5'-triphosphate = RNA(n+1) + diphosphate. Functionally, DNA-dependent RNA polymerase catalyzes the transcription of DNA into RNA using the four ribonucleoside triphosphates as substrates. This chain is DNA-directed RNA polymerase subunit alpha, found in Aromatoleum aromaticum (strain DSM 19018 / LMG 30748 / EbN1) (Azoarcus sp. (strain EbN1)).